Reading from the N-terminus, the 549-residue chain is Probable protein kinase UbiB (549 aa).

The 379-residue stretch at 123–501 folds into the Protein kinase domain; sequence DFNETPLASA…QQQAHKSNYL (379 aa). Residues 129–137 and K152 each bind ATP; that span reads LASASISQV. The active-site Proton acceptor is the D287. Helical transmembrane passes span 498–518 and 520–540; these read SNYL…LFNQ and ATLW…IIGW.

It belongs to the ABC1 family. UbiB subfamily.

The protein localises to the cell inner membrane. The protein operates within cofactor biosynthesis; ubiquinone biosynthesis [regulation]. Functionally, is probably a protein kinase regulator of UbiI activity which is involved in aerobic coenzyme Q (ubiquinone) biosynthesis. The sequence is that of Probable protein kinase UbiB from Shewanella sp. (strain MR-4).